Consider the following 219-residue polypeptide: uncharacterized protein (219 aa).

3 stretches are compositionally biased toward basic and acidic residues: residues 1–20 (METP…ESLR), 30–39 (AGRELVELRV), and 156–170 (QEVR…ELQR). Residues 1-195 (METPIEREIR…PSLTASRGDG (195 aa)) are disordered.

Belongs to the MISP family.

This is an uncharacterized protein from Homo sapiens (Human).